The primary structure comprises 273 residues: L-fucose dehydrogenase (273 aa).

NAD(+)-binding residues include Arg-19, Ile-21, Asp-40, Lys-41, Asp-62, Val-63, Asn-89, Tyr-154, Lys-158, Ile-187, Thr-189, and Leu-191. Tyr-154 (proton acceptor) is an active-site residue.

Belongs to the short-chain dehydrogenases/reductases (SDR) family. In terms of assembly, homotetramer.

The protein localises to the cytoplasm. The enzyme catalyses L-fucose + NAD(+) = L-fucono-1,5-lactone + NADH + H(+). The catalysed reaction is D-arabinose + NAD(+) = D-arabinono-1,5-lactone + NADH + H(+). It carries out the reaction L-galactose + NAD(+) = L-galactono-1,5-lactone + NADH + H(+). It participates in carbohydrate degradation; L-fucose degradation. Catalyzes the NAD(+)-dependent oxidation of L-fucose, yielding L-fucono-1,5-lactone, which rapidly converts spontaneously to L-fucone-1,4-lactone. Can also act on D-arabinose and L-galactose, with lower catalytic efficiency. Does not use NADPH. May be the initial enzyme of the putative L-fucose degradation pathway in mammals. The protein is L-fucose dehydrogenase of Mus musculus (Mouse).